A 1220-amino-acid polypeptide reads, in one-letter code: MGSKLKFAHLHQHTQFSLLDGAAKLQDLLKWVKETTPEDPALAMTDHGNLFGAVEFYKKATAMGVKPIIGYEAYVAAESRFDRKRGKGLDGGYFHLTLLAKDFTGYQNLVRLASRAYLEGFYEKPRIDREILREHAQGLIALSGCLGAEIPQFILQDRLDLAEARLNEDLSIFGDRFFIEIQNHGLPEQKKVNQVLKEFARKYGLGMVATNDGHYVRKEDARAHEVLLAIQSKTTLDDPERWRFPCDEFYVKTPEEMRAMLPEAEWGDEPFDNTVEIARMCDVDLPIGDKMVYRIPRFPLPEGRTEAQYLRELTFLGLLRRYPDRITEAFYREVLRLLGTMPPHGDERALAEALARVEEKAWEELRKRLPPLEGVREWTAEAILHRALYELSVIERMGFPGYFLIVQDYINWARGHGVSVGPGRGSAAGSLVAYAVGITNIDPLRFGLLFERFLNPERVSMPDIDTDFSDRERDRVIQYVRERYGEDKVAQIGTFGSLASKAALKDVARVYGIPHKKAEELAKLIPVQFGKPKPLQEAIQVVPELRAEMEKDERIRQVIEVAMRLEGLNRHASVHAAGVVIAAEPLTDLVPLMRDQEGRPVTQYDMGAVEALGLLKMDFLGLRTLTFLDEARRIVKESKGVELDYDRLPLDDPKTFELLSRGETKGVFQLESGGMTATVRGLKPRRLEDIIALVSLYRPGPMEHIPTYIRRHHGQEPVSYAEFPHAEKYLRPILDETYGIPVYQEQIMQIASQVAGYSLGEADLLRRAMGKKRVEEMQKHRERFVRGAKERGVPEEEANRLFDMLEAFANYGFNKSHAAAYSLLSYQTAYVKAHYPVEFMAALLSVERHDSDKVAEYIRDARALGIPVLPPDVNRSGFDFKVVGEEILFGLSAVKNVGEMAARAILEERERGGPFKSLGDFLKRLPEQVVNKRALESLVKAGALDAFGDRARLLASLEPLLRWAAETRERGRSGLVGLFAEVEEPPLVEASPLDEITMLRYEKEALGIYVSGHPVLRYPGLREVASCTIEELSEFVRELPGKPKVLLSGMVEEVVRKPTRSGGMMARFTLSDETGALEVVVFGRAYEGVSPKLKEDIPLLVLAEVEKGEELRVLAQAVWTLEEVLEAPKALEVEVDHALLDEKGVARLKSLLDEHPGSLPVYLRVLGPFGEALFALREVRVGEEALGLLEAEGYRAYLVPDREVFLQGNGGGPKEEVVPF.

This sequence belongs to the DNA polymerase type-C family. DnaE subfamily. DNA polymerase III contains a core (composed of alpha, epsilon and theta chains) that associates with a tau subunit. This core dimerizes to form the PolIII' complex. PolIII' associates with the gamma complex (composed of gamma, delta, delta', psi and chi chains) and with the beta chain to form the complete DNA polymerase III complex.

Its subcellular location is the cytoplasm. It catalyses the reaction DNA(n) + a 2'-deoxyribonucleoside 5'-triphosphate = DNA(n+1) + diphosphate. Functionally, DNA polymerase III is a complex, multichain enzyme responsible for most of the replicative synthesis in bacteria. This DNA polymerase also exhibits 3' to 5' exonuclease activity. The alpha chain is the DNA polymerase. The sequence is that of DNA polymerase III subunit alpha (dnaE) from Thermus aquaticus.